Reading from the N-terminus, the 186-residue chain is Elongation factor P (186 aa).

Belongs to the elongation factor P family.

The protein resides in the cytoplasm. The protein operates within protein biosynthesis; polypeptide chain elongation. Involved in peptide bond synthesis. Stimulates efficient translation and peptide-bond synthesis on native or reconstituted 70S ribosomes in vitro. Probably functions indirectly by altering the affinity of the ribosome for aminoacyl-tRNA, thus increasing their reactivity as acceptors for peptidyl transferase. The polypeptide is Elongation factor P (Brucella abortus (strain S19)).